The following is a 198-amino-acid chain: Putative 3-methyladenine DNA glycosylase (198 aa).

This sequence belongs to the DNA glycosylase MPG family.

The polypeptide is Putative 3-methyladenine DNA glycosylase (Natranaerobius thermophilus (strain ATCC BAA-1301 / DSM 18059 / JW/NM-WN-LF)).